We begin with the raw amino-acid sequence, 170 residues long: Phosphopantetheine adenylyltransferase (170 aa).

Thr-10 contributes to the substrate binding site. Residues 10-11 (TF) and His-18 contribute to the ATP site. Substrate-binding residues include Lys-42, Leu-75, and Arg-89. ATP is bound by residues 90–92 (GVR), Glu-100, and 125–131 (YTYVASS).

The protein belongs to the bacterial CoaD family. Homohexamer. The cofactor is Mg(2+).

It localises to the cytoplasm. The enzyme catalyses (R)-4'-phosphopantetheine + ATP + H(+) = 3'-dephospho-CoA + diphosphate. It participates in cofactor biosynthesis; coenzyme A biosynthesis; CoA from (R)-pantothenate: step 4/5. Its function is as follows. Reversibly transfers an adenylyl group from ATP to 4'-phosphopantetheine, yielding dephospho-CoA (dPCoA) and pyrophosphate. This chain is Phosphopantetheine adenylyltransferase, found in Chlorobium limicola (strain DSM 245 / NBRC 103803 / 6330).